The sequence spans 318 residues: Glycine--tRNA ligase alpha subunit (318 aa).

This sequence belongs to the class-II aminoacyl-tRNA synthetase family. In terms of assembly, tetramer of two alpha and two beta subunits.

The protein localises to the cytoplasm. The enzyme catalyses tRNA(Gly) + glycine + ATP = glycyl-tRNA(Gly) + AMP + diphosphate. In Moraxella catarrhalis (Branhamella catarrhalis), this protein is Glycine--tRNA ligase alpha subunit (glyQ).